Here is a 780-residue protein sequence, read N- to C-terminus: ATP-dependent 6-phosphofructokinase, muscle type (780 aa).

The residue at position 2 (Thr-2) is an N-acetylthreonine. The tract at residues Thr-2–His-390 is N-terminal catalytic PFK domain 1. ATP contacts are provided by residues Gly-25, Arg-88 to Cys-89, and Gly-118 to Ser-121. Asp-119 contacts Mg(2+). A Phosphoserine modification is found at Ser-133. Substrate-binding positions include Ser-164–Asp-166, Arg-201, Met-208–Arg-210, Glu-264, Arg-292, and His-298–Arg-301. Residue Asp-166 is the Proton acceptor of the active site. Ser-377 carries the phosphoserine modification. Positions Val-391 to His-401 are interdomain linker. The C-terminal regulatory PFK domain 2 stretch occupies residues Thr-402–Val-780. Beta-D-fructose 2,6-bisphosphate is bound by residues Arg-471 and Thr-528–Asn-532. An O-linked (GlcNAc) serine glycan is attached at Ser-530. The residue at position 557 (Lys-557) is an N6-(2-hydroxyisobutyryl)lysine. Beta-D-fructose 2,6-bisphosphate is bound by residues Arg-566, Met-573–Gly-575, Glu-629, Arg-655, and His-661–Gln-664. Ser-667 carries the post-translational modification Phosphoserine. Position 735 (Arg-735) interacts with beta-D-fructose 2,6-bisphosphate. Residue Ser-775 is modified to Phosphoserine.

It belongs to the phosphofructokinase type A (PFKA) family. ATP-dependent PFK group I subfamily. Eukaryotic two domain clade 'E' sub-subfamily. In terms of assembly, homo- and heterotetramers. Phosphofructokinase (PFK) enzyme functions as a tetramer composed of different combinations of 3 types of subunits, called PFKM (M), PFKL (L) and PFKP (P). The composition of the PFK tetramer differs according to the tissue type it is present in. The kinetic and regulatory properties of the tetrameric enzyme are dependent on the subunit composition, hence can vary across tissues. Interacts (via C-terminus) with HK1 (via N-terminal spermatogenic cell-specific region). It depends on Mg(2+) as a cofactor. In terms of processing, glcNAcylation decreases enzyme activity.

It is found in the cytoplasm. It catalyses the reaction beta-D-fructose 6-phosphate + ATP = beta-D-fructose 1,6-bisphosphate + ADP + H(+). The protein operates within carbohydrate degradation; glycolysis; D-glyceraldehyde 3-phosphate and glycerone phosphate from D-glucose: step 3/4. With respect to regulation, allosterically activated by ADP, AMP, or fructose 2,6-bisphosphate, and allosterically inhibited by ATP or citrate. Functionally, catalyzes the phosphorylation of D-fructose 6-phosphate to fructose 1,6-bisphosphate by ATP, the first committing step of glycolysis. The protein is ATP-dependent 6-phosphofructokinase, muscle type (PFKM) of Pongo abelii (Sumatran orangutan).